We begin with the raw amino-acid sequence, 335 residues long: Eukaryotic translation initiation factor 3 subunit I (335 aa).

5 WD repeats span residues 8–47, 50–91, 145–184, 189–228, and 286–325; these read GHER…RLGT, GHQG…KVWD, CTES…QLEN, EFDN…ILKT, and GHFG…FDFM.

The protein belongs to the eIF-3 subunit I family. Component of the eukaryotic translation initiation factor 3 (eIF-3) complex.

Its subcellular location is the cytoplasm. Component of the eukaryotic translation initiation factor 3 (eIF-3) complex, which is involved in protein synthesis of a specialized repertoire of mRNAs and, together with other initiation factors, stimulates binding of mRNA and methionyl-tRNAi to the 40S ribosome. The eIF-3 complex specifically targets and initiates translation of a subset of mRNAs involved in cell proliferation. The sequence is that of Eukaryotic translation initiation factor 3 subunit I (tif34) from Aspergillus oryzae (strain ATCC 42149 / RIB 40) (Yellow koji mold).